We begin with the raw amino-acid sequence, 358 residues long: Leukotriene B4 receptor 2 (358 aa).

The Extracellular segment spans residues 1 to 24 (MSVCYRPPGNETLLSWKGSRATGT). Asn10 carries N-linked (GlcNAc...) asparagine glycosylation. A helical membrane pass occupies residues 25–45 (AFLLLAALLGLPGNGFVVWSL). Topologically, residues 46–60 (AGWRPTAGRPLAATL) are cytoplasmic. The chain crosses the membrane as a helical span at residues 61–81 (VLHLALADGAVLLLTPLFVAF). Residues 82–96 (LSRQAWPLGQVGCKA) are Extracellular-facing. A helical membrane pass occupies residues 97-117 (VYYVCALSMYASVLLTGLLSL). Residues 118–140 (QRCLAVTRPFLAPRLRSPALARR) are Cytoplasmic-facing. Residues 141 to 161 (LLLGVWLAALVLAVPAAVYRH) form a helical membrane-spanning segment. Over 162-185 (LWGDRVCQLCHPSAVHAAAHLSLE) the chain is Extracellular. The helical transmembrane segment at 186–206 (TLTAFVLPFGTVLGCYGVTLA) threads the bilayer. At 207 to 225 (RLRGARWGSGRQGTRVGRL) the chain is on the cytoplasmic side. A helical transmembrane segment spans residues 226-246 (VSAIVLAFGLLWAPYHAVNLL). The Extracellular portion of the chain corresponds to 247–275 (QAVAALAPPEGPLARLGGAGQAARAGTTA). Residues 276–296 (LAFFSSSVNPVLYVFTAGDLL) traverse the membrane as a helical segment. The Cytoplasmic portion of the chain corresponds to 297–358 (PRAGPRFLTR…GRMEKDSQEW (62 aa)). Residues 315 to 358 (RVGSRSREGTMELRTTPRLKVVGQGRGYGDPGGGGRMEKDSQEW) are disordered. Residues 338-349 (QGRGYGDPGGGG) are compositionally biased toward gly residues.

Belongs to the G-protein coupled receptor 1 family.

The protein localises to the cell membrane. Functionally, low-affinity receptor for leukotrienes including leukotriene B4. Mediates chemotaxis of granulocytes and macrophages. The response is mediated via G-proteins that activate a phosphatidylinositol-calcium second messenger system. The protein is Leukotriene B4 receptor 2 (Ltb4r2) of Rattus norvegicus (Rat).